We begin with the raw amino-acid sequence, 162 residues long: uncharacterized protein (162 aa).

This is an uncharacterized protein from Acanthamoeba polyphaga (Amoeba).